Here is a 991-residue protein sequence, read N- to C-terminus: 5'-3' exoribonuclease 2 (991 aa).

The Nuclear localization signal signature appears at 264–268 (TKKTK). A compositionally biased stretch (basic and acidic residues) spans 404–418 (RRNENYRRRQQRESN). 3 disordered regions span residues 404–461 (RRNE…TQKI), 547–582 (SIES…ENTD), and 872–991 (AERS…NGYY). Over residues 433-452 (SVETQSTEVVTSSKSTSVDT) the composition is skewed to low complexity. 2 stretches are compositionally biased toward low complexity: residues 878 to 889 (SRRNNGNSYRGG) and 896 to 910 (RRSY…RQSY). Residues 926-938 (WSGNGNFPRSNAS) are compositionally biased toward polar residues. Positions 946–958 (EGYGGRSRGGGYS) are enriched in gly residues. Over residues 980–991 (ESYNNNNRNGYY) the composition is skewed to polar residues.

Belongs to the 5'-3' exonuclease family. XRN2/RAT1 subfamily. In terms of assembly, interacts with din1/rai1; the interaction is direct, stabilizes dhp1 protein structure and may stimulate its exoribonuclease activity. The interaction also stimulates din1 pyrophosphohydrolase activity, probably by recruiting it to mRNA substrates.

Its subcellular location is the nucleus. Its function is as follows. Possesses 5'-&gt;3' exoribonuclease activity. Required for the processing of nuclear mRNA and rRNA precursors. May promote the termination of transcription by RNA polymerase II. Essential for vegetative cell growth and chromosome segregation. The sequence is that of 5'-3' exoribonuclease 2 (dhp1) from Schizosaccharomyces pombe (strain 972 / ATCC 24843) (Fission yeast).